The primary structure comprises 1714 residues: Latrophilin Cirl (1714 aa).

The Extracellular segment spans residues 1-765; sequence MSSIDISGRY…LFTMFDGNMR (765 aa). The region spanning 26–115 is the SUEL-type lectin domain; that stretch reads ACEGKKLTIE…KYLEAHYQCI (90 aa). A glycan (N-linked (GlcNAc...) asparagine) is linked at N143. The segment at 183 to 302 is disordered; that stretch reads PPHTVTHSTP…GSPASGNNSV (120 aa). The segment covering 186-198 has biased composition (low complexity); sequence TVTHSTPSSSTVP. Positions 244 to 262 are enriched in polar residues; the sequence is PSSKLPSAGNATAPSNTRI. A glycan (N-linked (GlcNAc...) asparagine) is linked at N253. 2 stretches are compositionally biased toward low complexity: residues 272-282 and 290-301; these read DDGTLLTTKSS and ASNGSPASGNNS. Residues N299, N338, N395, N652, N701, and N728 are each glycosylated (N-linked (GlcNAc...) asparagine). The segment at 373 to 397 is disordered; sequence YDEYDDDPSSTTPAPSGGDCLHNSS. The 195-residue stretch at 558–752 folds into the GAIN-B domain; sequence RSVVQKVKNI…AILMDVVDEH (195 aa). 2 disulfides stabilise this stretch: C707/C734 and C722/C736. A GPS region spans residues 707–752; it reads CVFWNYIDHAWSANGCSLESTNRTHSVCSCNHLTNFAILMDVVDEH. A helical transmembrane segment spans residues 766–786; sequence VFIYISIAICVVFIVIALLTL. The Cytoplasmic portion of the chain corresponds to 787–799; the sequence is KLFNGVFVKSART. The helical transmembrane segment at 800–820 threads the bilayer; that stretch reads TIYTSIYVCLLAIELLFLLGI. The Extracellular segment spans residues 821-826; the sequence is EQTETS. Residues 827–847 form a helical membrane-spanning segment; it reads IFCGFITVFLHCAILSGAAWF. The Cytoplasmic portion of the chain corresponds to 848-873; that stretch reads CYEAFHSYYTLTSDELLVEVDQTPKV. Residues 874-894 traverse the membrane as a helical segment; sequence NWYYLLSYGLSVSVVAISVAI. Topologically, residues 895-911 are extracellular; it reads NPSTYTQNDYCVLMEAN. The helical transmembrane segment at 912-932 threads the bilayer; that stretch reads ILFYATFVAPVLIFFVAAIGY. The Cytoplasmic segment spans residues 933–966; it reads TFLSWIIMCRKSCTGLKTKEHTRLASVRFDIRCS. Residues 967-987 form a helical membrane-spanning segment; that stretch reads FVFLLLLSAVWCSAYFYLRGA. Topologically, residues 988-994 are extracellular; it reads KTDEDTT. Residues 995–1015 form a helical membrane-spanning segment; that stretch reads TIYGYCFICFNTLLGLYIFVF. At 1016–1714 the chain is on the cytoplasmic side; it reads HCIQNEKIRR…VRCYLEPLAK (699 aa). Residues S1155, S1245, and S1252 each carry the phosphoserine modification. Disordered stretches follow at residues 1229-1253, 1268-1287, 1293-1354, 1447-1536, and 1551-1694; these read PNSQHGKKKRGGAVPASPSGSLHSR, KTKQGQPSGYPHYAEALDPP, AFYQ…PPPH, GGGS…DERM, and FQRQ…QQRH. Positions 1296–1315 are enriched in low complexity; that stretch reads QQQQQMRRQQQQQQQQQQQQ. Residues S1317 and S1318 each carry the phosphoserine modification. Low complexity-rich tracts occupy residues 1330-1348 and 1453-1478; these read LHLQHQQQHQRRVGGQQQL and GGSVSSRSQQQQLQKQQKQQQQQQQR. 2 stretches are compositionally biased toward acidic residues: residues 1486–1500 and 1510–1523; these read DDDDDDDEEEDDEAT and CDDDDEEEDSDLDD. The span at 1524 to 1536 shows a compositional bias: basic and acidic residues; it reads DAHKLPPQSDERM. Residues 1565–1580 are compositionally biased toward low complexity; the sequence is GALPPGVAPGAGSAGP. The segment covering 1644–1659 has biased composition (polar residues); that stretch reads QTPAQKRQQLQKLSPQ. The segment covering 1660 to 1675 has biased composition (low complexity); the sequence is STTSSSSHTSHSNLQP. Basic residues predominate over residues 1679–1693; sequence PLTHQHPHPPQHQQR.

This sequence belongs to the G-protein coupled receptor 2 family. LN-TM7 subfamily. As to quaternary structure, forms a heterodimer, consisting of a large extracellular region non-covalently linked to a seven-transmembrane moiety. Post-translationally, proteolytically cleaved into 2 subunits, an extracellular subunit and a seven-transmembrane subunit.

The protein resides in the cell membrane. This Drosophila ananassae (Fruit fly) protein is Latrophilin Cirl.